The following is a 517-amino-acid chain: GMP synthase [glutamine-hydrolyzing] (517 aa).

The Glutamine amidotransferase type-1 domain maps to 9-199; it reads RILILDFGSQ…VLGVCGCERL (191 aa). The Nucleophile role is filled by C86. Active-site residues include H173 and E175. Positions 200–392 constitute a GMPS ATP-PPase domain; sequence WTSESIIEDA…LGLPYNMLYR (193 aa). 227–233 is an ATP binding site; sequence SGGVDSS.

As to quaternary structure, homodimer.

The catalysed reaction is XMP + L-glutamine + ATP + H2O = GMP + L-glutamate + AMP + diphosphate + 2 H(+). It participates in purine metabolism; GMP biosynthesis; GMP from XMP (L-Gln route): step 1/1. Its function is as follows. Catalyzes the synthesis of GMP from XMP. This chain is GMP synthase [glutamine-hydrolyzing], found in Vibrio cholerae serotype O1 (strain ATCC 39541 / Classical Ogawa 395 / O395).